The sequence spans 269 residues: 4-hydroxy-tetrahydrodipicolinate reductase (269 aa).

NAD(+) contacts are provided by residues 8-13 (GAAGRM) and glutamate 34. Arginine 35 provides a ligand contact to NADP(+). NAD(+) is bound by residues 98 to 100 (GTT) and 122 to 125 (APNY). Histidine 155 serves as the catalytic Proton donor/acceptor. Histidine 156 is a (S)-2,3,4,5-tetrahydrodipicolinate binding site. Lysine 159 serves as the catalytic Proton donor. 165-166 (GT) is a (S)-2,3,4,5-tetrahydrodipicolinate binding site.

It belongs to the DapB family.

Its subcellular location is the cytoplasm. The catalysed reaction is (S)-2,3,4,5-tetrahydrodipicolinate + NAD(+) + H2O = (2S,4S)-4-hydroxy-2,3,4,5-tetrahydrodipicolinate + NADH + H(+). It catalyses the reaction (S)-2,3,4,5-tetrahydrodipicolinate + NADP(+) + H2O = (2S,4S)-4-hydroxy-2,3,4,5-tetrahydrodipicolinate + NADPH + H(+). The protein operates within amino-acid biosynthesis; L-lysine biosynthesis via DAP pathway; (S)-tetrahydrodipicolinate from L-aspartate: step 4/4. Its function is as follows. Catalyzes the conversion of 4-hydroxy-tetrahydrodipicolinate (HTPA) to tetrahydrodipicolinate. This is 4-hydroxy-tetrahydrodipicolinate reductase from Vibrio cholerae serotype O1 (strain ATCC 39315 / El Tor Inaba N16961).